The sequence spans 459 residues: Ribulose bisphosphate carboxylase large chain (459 aa).

At Lys-4 the chain carries N6,N6,N6-trimethyllysine. 2 residues coordinate substrate: Asn-113 and Thr-163. The Proton acceptor role is filled by Lys-165. Lys-167 lines the substrate pocket. Mg(2+) contacts are provided by Lys-191, Asp-193, and Glu-194. Lys-191 carries the N6-carboxylysine modification. His-284 (proton acceptor) is an active-site residue. Residues Arg-285, His-317, and Ser-369 each coordinate substrate.

This sequence belongs to the RuBisCO large chain family. Type I subfamily. As to quaternary structure, heterohexadecamer of 8 large chains and 8 small chains; disulfide-linked. The disulfide link is formed within the large subunit homodimers. Mg(2+) serves as cofactor. In terms of processing, the disulfide bond which can form in the large chain dimeric partners within the hexadecamer appears to be associated with oxidative stress and protein turnover.

It localises to the plastid. The protein resides in the chloroplast. The enzyme catalyses 2 (2R)-3-phosphoglycerate + 2 H(+) = D-ribulose 1,5-bisphosphate + CO2 + H2O. The catalysed reaction is D-ribulose 1,5-bisphosphate + O2 = 2-phosphoglycolate + (2R)-3-phosphoglycerate + 2 H(+). Functionally, ruBisCO catalyzes two reactions: the carboxylation of D-ribulose 1,5-bisphosphate, the primary event in carbon dioxide fixation, as well as the oxidative fragmentation of the pentose substrate in the photorespiration process. Both reactions occur simultaneously and in competition at the same active site. In Micranthes integrifolia (Wholeleaf saxifrage), this protein is Ribulose bisphosphate carboxylase large chain.